A 235-amino-acid chain; its full sequence is Glycerol-3-phosphate acyltransferase (235 aa).

The next 6 helical transmembrane spans lie at 4–24, 56–76, 94–114, 125–145, 152–172, and 191–211; these read LLAI…IMAG, SVTL…VAFF, LLAG…GFKG, LIGI…LTVW, VASI…KYVF, and FHDS…LAIL.

It belongs to the PlsY family. Probably interacts with PlsX.

It is found in the cell inner membrane. The catalysed reaction is an acyl phosphate + sn-glycerol 3-phosphate = a 1-acyl-sn-glycero-3-phosphate + phosphate. It functions in the pathway lipid metabolism; phospholipid metabolism. Its function is as follows. Catalyzes the transfer of an acyl group from acyl-phosphate (acyl-PO(4)) to glycerol-3-phosphate (G3P) to form lysophosphatidic acid (LPA). This enzyme utilizes acyl-phosphate as fatty acyl donor, but not acyl-CoA or acyl-ACP. This chain is Glycerol-3-phosphate acyltransferase, found in Chlorobium luteolum (strain DSM 273 / BCRC 81028 / 2530) (Pelodictyon luteolum).